Consider the following 455-residue polypeptide: uncharacterized protein (455 aa).

Residues Asn-42, Asn-49, and Asn-70 are each glycosylated (N-linked (GlcNAc...) asparagine). Transmembrane regions (helical) follow at residues 127–147 (AILI…TWIF), 153–173 (SLLD…MFRI), 177–197 (ICAL…ITYY), and 377–397 (YKFC…EIIF). The N-linked (GlcNAc...) asparagine glycan is linked to Asn-403.

The protein localises to the membrane. This is an uncharacterized protein from Caenorhabditis elegans.